We begin with the raw amino-acid sequence, 710 residues long: MSKQTFTTTFAGKPLVVEVGQVAKQANGATVVRYGDSTVLTATVMSKKMATGDFFPLQVNYEEKMYAAGKFPGGFMKREGRPSTDATLTARLIDRPIRPMFAEGFRNEVQVINTVLSYDENASAPMAAMFGSSLALSISDIPFNGPIAGVQVGYIDGEFIINPDKEQMEASLLELTVAGSKEAINMVESGAKELSEDIMLEALLKGHQAIQELIAFQEQIVAVVGKEKAEVELLQVDADLQADIVAKYNAQLQKAVQVEEKKAREAATEAVKEMVKAEYEERYAEDENLATIMRDVAEILEQMEHAEVRRLITEDKIRPDGRKIDEIRPLDAVVDFLPKVHGSGLFTRGQTQALSVLTLAPMGETQIIDGLAPEYKKRFLHHYNFPQYSVGETGRYGAAGRREIGHGALGERALEQVLPSLEEFPYAIRLVAEVLESNGSSSQASICAGTLALMAGGVPIKAPVAGIAMGLISDGTNYTVLTDIQGLEDHFGDMDFKVAGTREGITALQMDIKIAGITPQILEEALAQAKKARFEILDVIEATIAEPRPELAPTAPKIDTIKIDVDKIKVVIGKGGETIDKIIAETGVKIDIDDEGNVSIYSSDQAAIDRTKEIIAGLVREAKVGEVYHAKVIRIEKFGAFVNLFDKTDALVHISEIAWTRTANVSDVLEVGEDVDVKVIKIDEKGRVDASMKALIPRPPKQEKKEEKHD.

2 residues coordinate Mg(2+): aspartate 489 and aspartate 495. One can recognise a KH domain in the interval 556–615; that stretch reads PKIDTIKIDVDKIKVVIGKGGETIDKIIAETGVKIDIDDEGNVSIYSSDQAAIDRTKEII. One can recognise an S1 motif domain in the interval 625–693; the sequence is GEVYHAKVIR…EKGRVDASMK (69 aa).

It belongs to the polyribonucleotide nucleotidyltransferase family. Mg(2+) serves as cofactor.

The protein localises to the cytoplasm. The enzyme catalyses RNA(n+1) + phosphate = RNA(n) + a ribonucleoside 5'-diphosphate. Involved in mRNA degradation. Catalyzes the phosphorolysis of single-stranded polyribonucleotides processively in the 3'- to 5'-direction. The protein is Polyribonucleotide nucleotidyltransferase of Streptococcus pyogenes serotype M3 (strain ATCC BAA-595 / MGAS315).